The primary structure comprises 692 residues: ATP-dependent DNA helicase DinG (692 aa).

The Helicase ATP-binding domain maps to 16-293; it reads NLGNQLDNFI…AELAEYKKAA (278 aa). 56–63 lines the ATP pocket; it reads AGTGIGKS. Cysteine 123 is a [4Fe-4S] cluster binding site. Positions 134 to 137 match the DEAH box motif; it reads NNDQ. [4Fe-4S] cluster-binding residues include cysteine 192 and cysteine 202. The DEAH box motif lies at 247–250; sequence DEAH. The Helicase C-terminal domain occupies 514–692; that stretch reads LIKTLPEYLE…PPFKRVIEYS (179 aa).

This sequence belongs to the helicase family. DinG subfamily. Type 1 sub-subfamily. [4Fe-4S] cluster is required as a cofactor.

It carries out the reaction Couples ATP hydrolysis with the unwinding of duplex DNA at the replication fork by translocating in the 5'-3' direction. This creates two antiparallel DNA single strands (ssDNA). The leading ssDNA polymer is the template for DNA polymerase III holoenzyme which synthesizes a continuous strand.. The enzyme catalyses ATP + H2O = ADP + phosphate + H(+). DNA-dependent ATPase and 5'-3' DNA helicase. Unwinds D-loops, R-loops, forked DNA and G-quadruplex DNA. The chain is ATP-dependent DNA helicase DinG from Photobacterium profundum (strain SS9).